We begin with the raw amino-acid sequence, 274 residues long: Thiamine kinase (274 aa).

It belongs to the thiamine kinase family.

The catalysed reaction is thiamine + ATP = thiamine phosphate + ADP + H(+). Its pathway is cofactor biosynthesis; thiamine diphosphate biosynthesis; thiamine phosphate from thiamine: step 1/1. In terms of biological role, catalyzes the ATP-dependent phosphorylation of thiamine to thiamine phosphate. Is involved in thiamine salvage. This is Thiamine kinase from Salmonella typhi.